The sequence spans 25 residues: Small ribosomal subunit protein eS32 (25 aa).

Positions 1-25 (MRAKWRKKRVRRLKRKRRKVRARSK) are disordered.

It belongs to the eukaryotic ribosomal protein eS32 family. Component of the small ribosomal subunit.

The protein is Small ribosomal subunit protein eS32 (RPL41) of Eremothecium gossypii (strain ATCC 10895 / CBS 109.51 / FGSC 9923 / NRRL Y-1056) (Yeast).